Consider the following 83-residue polypeptide: uncharacterized protein (83 aa).

A helical membrane pass occupies residues 58-80 (YWGYGAAYGISLGLIAGVALAGL).

Its subcellular location is the membrane. This is an uncharacterized protein from Bacillus subtilis (strain 168).